Consider the following 458-residue polypeptide: uncharacterized protein (458 aa).

The 59-residue stretch at 8–66 (PVEKNEFIDVVFEDLTHDGAGVAKVKGYPIFVKNGLPGEEAQIKIIKVKKNFAFGRLMK) folds into the TRAM domain. The [4Fe-4S] cluster site is built by cysteine 79, cysteine 85, cysteine 88, and cysteine 166. Residues glutamine 290, tyrosine 319, glutamate 340, and aspartate 388 each coordinate S-adenosyl-L-methionine. Residue cysteine 415 is the Nucleophile of the active site.

This sequence belongs to the class I-like SAM-binding methyltransferase superfamily. RNA M5U methyltransferase family.

This is an uncharacterized protein from Bacillus cereus (strain ATCC 14579 / DSM 31 / CCUG 7414 / JCM 2152 / NBRC 15305 / NCIMB 9373 / NCTC 2599 / NRRL B-3711).